Here is a 150-residue protein sequence, read N- to C-terminus: Large ribosomal subunit protein bL9 (150 aa).

This sequence belongs to the bacterial ribosomal protein bL9 family.

Functionally, binds to the 23S rRNA. This chain is Large ribosomal subunit protein bL9, found in Streptococcus gordonii (strain Challis / ATCC 35105 / BCRC 15272 / CH1 / DL1 / V288).